We begin with the raw amino-acid sequence, 885 residues long: DNA mismatch repair protein MutS (885 aa).

Residue 626-633 participates in ATP binding; it reads GPNMGGKS.

Belongs to the DNA mismatch repair MutS family.

Functionally, this protein is involved in the repair of mismatches in DNA. It is possible that it carries out the mismatch recognition step. This protein has a weak ATPase activity. The sequence is that of DNA mismatch repair protein MutS from Burkholderia cenocepacia (strain ATCC BAA-245 / DSM 16553 / LMG 16656 / NCTC 13227 / J2315 / CF5610) (Burkholderia cepacia (strain J2315)).